A 473-amino-acid polypeptide reads, in one-letter code: Cysteine--tRNA ligase (473 aa).

Cys28 serves as a coordination point for Zn(2+). The 'HIGH' region motif lies at 30-40 (MTVYDYCHLGH). Zn(2+)-binding residues include Cys209, His234, and Glu238. Positions 282 to 286 (KMSKS) match the 'KMSKS' region motif. Lys285 lines the ATP pocket.

The protein belongs to the class-I aminoacyl-tRNA synthetase family. In terms of assembly, monomer. Requires Zn(2+) as cofactor.

The protein localises to the cytoplasm. The enzyme catalyses tRNA(Cys) + L-cysteine + ATP = L-cysteinyl-tRNA(Cys) + AMP + diphosphate. The chain is Cysteine--tRNA ligase from Neisseria gonorrhoeae (strain ATCC 700825 / FA 1090).